The primary structure comprises 353 residues: Protein pelota homolog (353 aa).

The protein belongs to the eukaryotic release factor 1 family. Pelota subfamily. Monomer. A divalent metal cation serves as cofactor.

The protein localises to the cytoplasm. May function in recognizing stalled ribosomes, interact with stem-loop structures in stalled mRNA molecules, and effect endonucleolytic cleavage of the mRNA. May play a role in the release non-functional ribosomes and degradation of damaged mRNAs. Has endoribonuclease activity. This Methanothermobacter thermautotrophicus (strain ATCC 29096 / DSM 1053 / JCM 10044 / NBRC 100330 / Delta H) (Methanobacterium thermoautotrophicum) protein is Protein pelota homolog.